The following is a 356-amino-acid chain: Peptide chain release factor 1 (356 aa).

An N5-methylglutamine modification is found at Q230. Residues 279-289 show a composition bias toward basic and acidic residues; sequence ALDSARSEARK. A disordered region spans residues 279–299; sequence ALDSARSEARKSQVGSGDRSE.

It belongs to the prokaryotic/mitochondrial release factor family. Methylated by PrmC. Methylation increases the termination efficiency of RF1.

The protein localises to the cytoplasm. Peptide chain release factor 1 directs the termination of translation in response to the peptide chain termination codons UAG and UAA. The chain is Peptide chain release factor 1 (prfA) from Caulobacter vibrioides (strain ATCC 19089 / CIP 103742 / CB 15) (Caulobacter crescentus).